Consider the following 249-residue polypeptide: 5'-nucleotidase SurE (249 aa).

A divalent metal cation contacts are provided by D8, D9, S39, and N91.

The protein belongs to the SurE nucleotidase family. The cofactor is a divalent metal cation.

It localises to the cytoplasm. The enzyme catalyses a ribonucleoside 5'-phosphate + H2O = a ribonucleoside + phosphate. Nucleotidase that shows phosphatase activity on nucleoside 5'-monophosphates. The chain is 5'-nucleotidase SurE from Pseudomonas aeruginosa (strain UCBPP-PA14).